A 137-amino-acid chain; its full sequence is uncharacterized protein (137 aa).

Residues 75 to 91 traverse the membrane as a helical segment; it reads MFLDAMVILAVASGVSL. The disordered stretch occupies residues 93–116; it reads PQLPGRRSHNASTPGAKKPGKDHG.

It is found in the membrane. This is an uncharacterized protein from Saccharomyces cerevisiae (strain ATCC 204508 / S288c) (Baker's yeast).